The sequence spans 149 residues: MDISRWLERHVGVQLLRLHDAIYRGTNGRIGHRIPGAPPSLLLHTTGAKTSQPRTTSLTYARDGDAYLIVASKGGDPRSPGWYHNLKANPDVEINVGPKRFGVTAKPVQPHDPDYARLWQIVNENNANRYTNYQSRTSRPIPVVVLTRR.

Residues 48–50, 54–59, 70–73, 81–85, and tyrosine 130 each bind coenzyme F420-(gamma-Glu)n; these read AKT, RTTSLT, VASK, and GWYHN.

Belongs to the F420H(2)-dependent quinone reductase family.

It is found in the cell membrane. The catalysed reaction is oxidized coenzyme F420-(gamma-L-Glu)(n) + a quinol + H(+) = reduced coenzyme F420-(gamma-L-Glu)(n) + a quinone. Functionally, involved in a F420-dependent anti-oxidant mechanism that protects M.tuberculosis against oxidative stress and bactericidal agents. Catalyzes the F420H(2)-dependent two-electron reduction of quinones to dihydroquinones, thereby preventing the formation of cytotoxic semiquinones obtained by the one-electron reduction pathway. In vitro, catalyzes the reduction of menadione to menadiol; since menaquinone is the sole quinone electron carrier in the respiratory chain in M.tuberculosis, the physiological electron acceptor for Fqr-mediated F420H(2) oxidation is therefore likely to be the endogenous menaquinone found in the membrane fraction of M.tuberculosis. The polypeptide is F420H(2)-dependent quinone reductase MT1299 (Mycobacterium tuberculosis (strain CDC 1551 / Oshkosh)).